Consider the following 201-residue polypeptide: Imidazole glycerol phosphate synthase subunit HisH 1 (201 aa).

Residues 1–201 (MIALIDYKAG…LKLLENFIRL (201 aa)) enclose the Glutamine amidotransferase type-1 domain. Catalysis depends on Cys80, which acts as the Nucleophile. Catalysis depends on residues His183 and Glu185.

In terms of assembly, heterodimer of HisH and HisF.

The protein localises to the cytoplasm. The enzyme catalyses 5-[(5-phospho-1-deoxy-D-ribulos-1-ylimino)methylamino]-1-(5-phospho-beta-D-ribosyl)imidazole-4-carboxamide + L-glutamine = D-erythro-1-(imidazol-4-yl)glycerol 3-phosphate + 5-amino-1-(5-phospho-beta-D-ribosyl)imidazole-4-carboxamide + L-glutamate + H(+). It carries out the reaction L-glutamine + H2O = L-glutamate + NH4(+). It functions in the pathway amino-acid biosynthesis; L-histidine biosynthesis; L-histidine from 5-phospho-alpha-D-ribose 1-diphosphate: step 5/9. In terms of biological role, IGPS catalyzes the conversion of PRFAR and glutamine to IGP, AICAR and glutamate. The HisH subunit provides the glutamine amidotransferase activity that produces the ammonia necessary to HisF for the synthesis of IGP and AICAR. The chain is Imidazole glycerol phosphate synthase subunit HisH 1 from Campylobacter jejuni (strain RM1221).